A 318-amino-acid polypeptide reads, in one-letter code: 26 kDa endochitinase 1 (318 aa).

Positions 1 to 19 (MRAFVLFAVVAMAATMAVA) are cleaved as a signal peptide. Positions 20-59 (EQCGSQAGGATCPNCLCCSRFGWCGSTPYCGDGCQSQCSG) constitute a Chitin-binding type-1 domain. 7 cysteine pairs are disulfide-bonded: C22-C37, C31-C43, C36-C49, C53-C57, C98-C160, C172-C180, and C279-C311. The Proton donor role is filled by E142.

The protein belongs to the glycosyl hydrolase 19 family. Chitinase class I subfamily.

It catalyses the reaction Random endo-hydrolysis of N-acetyl-beta-D-glucosaminide (1-&gt;4)-beta-linkages in chitin and chitodextrins.. In terms of biological role, defense against chitin-containing fungal pathogens. This chain is 26 kDa endochitinase 1, found in Hordeum vulgare (Barley).